Reading from the N-terminus, the 440-residue chain is Xylose isomerase (440 aa).

Active-site residues include His-101 and Asp-104. Residues Glu-232, Glu-268, His-271, Asp-296, Asp-307, Asp-309, and Asp-339 each contribute to the Mg(2+) site.

Belongs to the xylose isomerase family. Homotetramer. Requires Mg(2+) as cofactor.

It is found in the cytoplasm. The enzyme catalyses alpha-D-xylose = alpha-D-xylulofuranose. The chain is Xylose isomerase from Salmonella typhi.